An 81-amino-acid chain; its full sequence is MKKIILALIRFYQKFISPLKPPTCIYTPTCSEYTYQAVKKFGVFKGLFLGFKRILRCNPLHEGGEDPVPDKFYIIKGRRLD.

It belongs to the UPF0161 family.

It localises to the cell inner membrane. Functionally, could be involved in insertion of integral membrane proteins into the membrane. In Thermosipho melanesiensis (strain DSM 12029 / CIP 104789 / BI429), this protein is Putative membrane protein insertion efficiency factor.